The following is a 650-amino-acid chain: MEGGSVNESHSNADQMFDTTIEELCKNLCELQSSNQSPSRQSFGSYGDESKIDSDLQHLALGEMRDIDILEDEGDEDEVAKPEEFDVKSNSSNLDLEVMPRDMEKQTGKKNVTKSNVGVGGMRKKKVGGTKLQNGNEEPSSENVELARFLLNQARNLVSSGDSTHKALELTHRAAKLFEASAENGKPCLEWIMCLHVTAAVHCKLKEYNEAIPVLQRSVEIPVVEEGEEHALAKFAGLMQLGDTYAMVGQLESSISCYTEGLNIQKKVLGENDPRVGETCRYLAEALVQALRFDEAQQVCETALSIHRESGLPGSIAEAADRRLMGLICETKGDHENALEHLVLASMAMAANGQESEVAFVDTSIGDSYLSLSRFDEAICAYQKSLTALKTAKGENHPAVGSVYIRLADLYNRTGKVREAKSYCENALRIYESHNLEISPEEIASGLTDISVICESMNEVEQAITLLQKALKIYADSPGQKIMIAGIEAQMGVLYYMMGKYMESYNTFKSAISKLRATGKKQSTFFGIALNQMGLACIQLDAIEEAVELFEEAKCILEQECGPYHPETLGLYSNLAGAYDAIGRLDDAIKLLGHVVGVREEKLGTANPVTEDEKRRLAQLLKEAGNVTGRKAKSLKTLIDSDLTSSSALR.

The segment at 104–141 is disordered; it reads EKQTGKKNVTKSNVGVGGMRKKKVGGTKLQNGNEEPSS. Over residues 131 to 141 the composition is skewed to polar residues; sequence KLQNGNEEPSS. TPR repeat units lie at residues 192–225, 235–268, 277–310, 319–353, 359–392, 401–434, 444–477, 485–518, 527–560, and 569–602; these read IMCLHVTAAVHCKLKEYNEAIPVLQRSVEIPVVE, FAGLMQLGDTYAMVGQLESSISCYTEGLNIQKKV, GETCRYLAEALVQALRFDEAQQVCETALSIHRES, AADRRLMGLICETKGDHENALEHLVLASMAMAANG, AFVDTSIGDSYLSLSRFDEAICAYQKSLTALKTA, GSVYIRLADLYNRTGKVREAKSYCENALRIYESH, ASGLTDISVICESMNEVEQAITLLQKALKIYADS, AGIEAQMGVLYYMMGKYMESYNTFKSAISKLRAT, GIALNQMGLACIQLDAIEEAVELFEEAKCILEQE, and LGLYSNLAGAYDAIGRLDDAIKLLGHVVGVREEK.

The protein belongs to the kinesin light chain family.

The chain is Protein KINESIN LIGHT CHAIN-RELATED 3 from Arabidopsis thaliana (Mouse-ear cress).